Reading from the N-terminus, the 472-residue chain is ATP-dependent rRNA helicase rrp3 (472 aa).

Residues 1 to 52 (MRDVKKRKIAHEAPEHGSDTESTSSHKSVAQQDDPLETQDEATATESRPAPK) form a disordered region. The span at 10 to 19 (AHEAPEHGSD) shows a compositional bias: basic and acidic residues. Residues 20–31 (TESTSSHKSVAQ) are compositionally biased toward polar residues. Residues 52–80 (KSFKDLGIIDQLCEACETMGYKAPTPIQA) carry the Q motif motif. Residues 83–254 (IPLALQGRDL…RASLSNPLRV (172 aa)) enclose the Helicase ATP-binding domain. Position 96 to 103 (96 to 103 (AETGSGKT)) interacts with ATP. The DEAD box motif lies at 202–205 (DEAD). One can recognise a Helicase C-terminal domain in the interval 282–426 (YLVYLLNEFV…EYELEKDEVM (145 aa)). The tract at residues 444–472 (KNFDEKRGTKAKKFGKGKRSRDEMDQEEG) is disordered. The segment covering 452–462 (TKAKKFGKGKR) has biased composition (basic residues).

It belongs to the DEAD box helicase family. DDX47/RRP3 subfamily. As to quaternary structure, interacts with the SSU processome.

It is found in the nucleus. The catalysed reaction is ATP + H2O = ADP + phosphate + H(+). Its function is as follows. ATP-dependent rRNA helicase required for pre-ribosomal RNA processing. Involved in the maturation of the 35S-pre-rRNA and to its cleavage to mature 18S rRNA. The protein is ATP-dependent rRNA helicase rrp3 of Aspergillus fumigatus (strain ATCC MYA-4609 / CBS 101355 / FGSC A1100 / Af293) (Neosartorya fumigata).